A 189-amino-acid polypeptide reads, in one-letter code: ATP-dependent protease subunit HslV (189 aa).

Residue T12 is part of the active site. Residues S172, C175, and T178 each contribute to the Na(+) site.

The protein belongs to the peptidase T1B family. HslV subfamily. A double ring-shaped homohexamer of HslV is capped on each side by a ring-shaped HslU homohexamer. The assembly of the HslU/HslV complex is dependent on binding of ATP.

The protein resides in the cytoplasm. The catalysed reaction is ATP-dependent cleavage of peptide bonds with broad specificity.. Its activity is regulated as follows. Allosterically activated by HslU binding. Functionally, protease subunit of a proteasome-like degradation complex believed to be a general protein degrading machinery. This is ATP-dependent protease subunit HslV from Ehrlichia canis (strain Jake).